The following is a 98-amino-acid chain: MSSYKYYDLIRKPIITEKTTTLSEQNKYAFYVDKFAEKLTIKKAIEEIFKVKVKKVNILNVKGKKKRFKGIIGTQINRKKAIVTLEKDHNIDFAGGIK.

This sequence belongs to the universal ribosomal protein uL23 family. In terms of assembly, part of the 50S ribosomal subunit. Contacts protein L29, and trigger factor when it is bound to the ribosome.

In terms of biological role, one of the early assembly proteins it binds 23S rRNA. One of the proteins that surrounds the polypeptide exit tunnel on the outside of the ribosome. Forms the main docking site for trigger factor binding to the ribosome. In Rickettsia peacockii (strain Rustic), this protein is Large ribosomal subunit protein uL23.